Reading from the N-terminus, the 338-residue chain is tRNA N6-adenosine threonylcarbamoyltransferase (338 aa).

Fe cation-binding residues include H111 and H115. Substrate-binding positions include 134–138, D167, G180, and N272; that span reads LVSGG. D300 contacts Fe cation.

This sequence belongs to the KAE1 / TsaD family. Fe(2+) serves as cofactor.

Its subcellular location is the cytoplasm. It carries out the reaction L-threonylcarbamoyladenylate + adenosine(37) in tRNA = N(6)-L-threonylcarbamoyladenosine(37) in tRNA + AMP + H(+). Required for the formation of a threonylcarbamoyl group on adenosine at position 37 (t(6)A37) in tRNAs that read codons beginning with adenine. Is involved in the transfer of the threonylcarbamoyl moiety of threonylcarbamoyl-AMP (TC-AMP) to the N6 group of A37, together with TsaE and TsaB. TsaD likely plays a direct catalytic role in this reaction. This is tRNA N6-adenosine threonylcarbamoyltransferase from Aliivibrio salmonicida (strain LFI1238) (Vibrio salmonicida (strain LFI1238)).